The chain runs to 184 residues: tRNA (cytidine(56)-2'-O)-methyltransferase (184 aa).

S-adenosyl-L-methionine-binding positions include L87, 112-116 (GAEKV), and 130-137 (VANQPHSE).

The protein belongs to the aTrm56 family. As to quaternary structure, homodimer.

It is found in the cytoplasm. It carries out the reaction cytidine(56) in tRNA + S-adenosyl-L-methionine = 2'-O-methylcytidine(56) in tRNA + S-adenosyl-L-homocysteine + H(+). Specifically catalyzes the AdoMet-dependent 2'-O-ribose methylation of cytidine at position 56 in tRNAs. This chain is tRNA (cytidine(56)-2'-O)-methyltransferase, found in Methanocorpusculum labreanum (strain ATCC 43576 / DSM 4855 / Z).